Here is a 387-residue protein sequence, read N- to C-terminus: Mannitol-1-phosphate 5-dehydrogenase (387 aa).

3 to 14 (ALHFGAGNIGRG) contacts NAD(+).

The protein belongs to the mannitol dehydrogenase family.

The enzyme catalyses D-mannitol 1-phosphate + NAD(+) = beta-D-fructose 6-phosphate + NADH + H(+). This is Mannitol-1-phosphate 5-dehydrogenase from Yersinia pseudotuberculosis serotype IB (strain PB1/+).